A 186-amino-acid chain; its full sequence is uncharacterized protein (186 aa).

The Macro domain occupies 1–181; the sequence is MVSFSYKGNL…TFVSLASDFL (181 aa).

This sequence belongs to the MacroD-type family.

This is an uncharacterized protein from Thermoplasma volcanium (strain ATCC 51530 / DSM 4299 / JCM 9571 / NBRC 15438 / GSS1).